The sequence spans 694 residues: Outer dynein arm-docking complex subunit 1 (694 aa).

Coiled coils occupy residues 27–192 and 222–259; these read ELSR…RYLN and REEA…HLEQ. The tract at residues 271–290 is disordered; sequence RQPDPGVVQKEEQRAWETSE. The stretch at 339 to 418 forms a coiled coil; the sequence is NFINEQNSEL…EKIKTDIQVL (80 aa). Disordered stretches follow at residues 531-550 and 571-694; these read QDEE…TLSS and SILS…RGYN. A phosphoserine mark is found at S536, S542, S543, and S545. A compositionally biased stretch (low complexity) spans 628–642; that stretch reads TSSSSYLGSTGYLET. The span at 655-672 shows a compositional bias: polar residues; that stretch reads SQSMGSEMSRGFSSGSGQ. The segment covering 673–687 has biased composition (low complexity); that stretch reads TSSAAPASRPSSATS.

This sequence belongs to the ODA1/DCC2 family. Component of the outer dynein arm-docking complex along with ODAD2, ODAD3, ODAD4 and CLXN. Interacts with ODAD3. Interacts with ODAD4; this interaction may facilitate the recruitment and/or attachment of outer dynein arm docking complex proteins,including ODAD1, ODAD3, and ODAD4 to ciliary axonemes. Interacts with DNAH9. Interacts with MNS1. Interacts with PIERCE1 and PIERCE2; the interactions link the outer dynein arms docking complex (ODA-DC) to the internal microtubule inner proteins (MIP) in cilium axoneme.

It localises to the cytoplasm. It is found in the cytoskeleton. The protein resides in the cilium axoneme. In terms of biological role, component of the outer dynein arm-docking complex that mediates outer dynein arms (ODA) binding onto the doublet microtubule. Involved in mediating assembly of both ODAs and their axonemal docking complex onto ciliary microtubules. The chain is Outer dynein arm-docking complex subunit 1 (Odad1) from Rattus norvegicus (Rat).